The chain runs to 248 residues: Myelin protein P0 (248 aa).

A signal peptide spans 1–28; that stretch reads MAPGAPSSSPSPILAALLFSSLVLSPVQ. Residues 29-155 are Extracellular-facing; the sequence is AIVVYTDKEV…VFEKVPTRYG (127 aa). One can recognise an Ig-like V-type domain in the interval 30–143; that stretch reads IVVYTDKEVH…DIVGKTSQVT (114 aa). Residues cysteine 50 and cysteine 127 are joined by a disulfide bond. N-linked (GlcNAc...) (complex) asparagine glycosylation is present at asparagine 122. Residues 156 to 176 form a helical membrane-spanning segment; sequence VVLGAVIGGVLGVVLLALLLF. At 177 to 248 the chain is on the cytoplasmic side; sequence YLIRYCWLRR…GLGESRKDKK (72 aa). Serine 210 carries the post-translational modification Phosphoserine; by PKC. A disordered region spans residues 224 to 248; the sequence is DHSRSTKAASEKKTKGLGESRKDKK. Phosphoserine occurs at positions 226 and 228. A phosphoserine; by PKC mark is found at serine 233 and serine 243.

It belongs to the myelin P0 protein family. In terms of assembly, homodimer and homotetramer. In terms of processing, N-glycosylated; contains sulfate-substituted glycan. As to expression, found only in peripheral nervous system Schwann cells.

It is found in the cell membrane. Functionally, is an adhesion molecule necessary for normal myelination in the peripheral nervous system. It mediates adhesion between adjacent myelin wraps and ultimately drives myelin compaction. The chain is Myelin protein P0 (MPZ) from Bos taurus (Bovine).